A 230-amino-acid chain; its full sequence is Aspartate and serine-rich protein (230 aa).

N-linked (GlcNAc...) asparagine glycosylation is found at N17, N132, and N139. The disordered stretch occupies residues 112 to 230 (LNGGATAGGV…DSDSNDTDSD (119 aa)). Over residues 126–140 (DTDESSNDTDEDSND) the composition is skewed to acidic residues. The segment covering 141–161 (SDSKDTDSDSKDTDSDSKDSD) has biased composition (basic and acidic residues). N163 and N170 each carry an N-linked (GlcNAc...) asparagine glycan. Residues 173 to 223 (DSKDTDSDSKDSDSKDTDSDSKDTDSDSKDSDSKDTDSDSKDTDSDSKDSD) show a composition bias toward basic and acidic residues. The N-linked (GlcNAc...) asparagine glycan is linked to N225.

In terms of tissue distribution, component of the acid-insoluble organic matrix of calcified layers of the shell (at protein level).

The protein localises to the secreted. This Lottia gigantea (Giant owl limpet) protein is Aspartate and serine-rich protein.